The sequence spans 133 residues: Small ribosomal subunit protein uS9 (133 aa).

Over residues 97-113 the composition is skewed to basic and acidic residues; sequence SKQELKSHGFLTRDPRK. The tract at residues 97-133 is disordered; that stretch reads SKQELKSHGFLTRDPRKKERKKYGHKKARKSFQFSKR. Over residues 114-133 the composition is skewed to basic residues; that stretch reads KERKKYGHKKARKSFQFSKR.

It belongs to the universal ribosomal protein uS9 family.

The polypeptide is Small ribosomal subunit protein uS9 (Chlamydia abortus (strain DSM 27085 / S26/3) (Chlamydophila abortus)).